A 274-amino-acid polypeptide reads, in one-letter code: Large ribosomal subunit protein uL2 (274 aa).

Disordered stretches follow at residues 40 to 59 (SGGRNNLGRVTRRHQGGGHK) and 223 to 274 (VAMN…RRSR). Basic residues-rich tracts occupy residues 49–59 (VTRRHQGGGHK) and 256–274 (YRTRRNKRTSNMIVRRRSR).

Belongs to the universal ribosomal protein uL2 family. As to quaternary structure, part of the 50S ribosomal subunit. Forms a bridge to the 30S subunit in the 70S ribosome.

Its function is as follows. One of the primary rRNA binding proteins. Required for association of the 30S and 50S subunits to form the 70S ribosome, for tRNA binding and peptide bond formation. It has been suggested to have peptidyltransferase activity; this is somewhat controversial. Makes several contacts with the 16S rRNA in the 70S ribosome. The polypeptide is Large ribosomal subunit protein uL2 (Acidithiobacillus ferrooxidans (strain ATCC 23270 / DSM 14882 / CIP 104768 / NCIMB 8455) (Ferrobacillus ferrooxidans (strain ATCC 23270))).